The primary structure comprises 212 residues: Octanoyltransferase (212 aa).

Residues Ala31–Ile209 enclose the BPL/LPL catalytic domain. Substrate-binding positions include Arg70–His77, Ser138–Gly140, and Gly151–Ala153. Catalysis depends on Cys169, which acts as the Acyl-thioester intermediate.

This sequence belongs to the LipB family.

It localises to the cytoplasm. The catalysed reaction is octanoyl-[ACP] + L-lysyl-[protein] = N(6)-octanoyl-L-lysyl-[protein] + holo-[ACP] + H(+). Its pathway is protein modification; protein lipoylation via endogenous pathway; protein N(6)-(lipoyl)lysine from octanoyl-[acyl-carrier-protein]: step 1/2. In terms of biological role, catalyzes the transfer of endogenously produced octanoic acid from octanoyl-acyl-carrier-protein onto the lipoyl domains of lipoate-dependent enzymes. Lipoyl-ACP can also act as a substrate although octanoyl-ACP is likely to be the physiological substrate. The polypeptide is Octanoyltransferase (Haemophilus influenzae (strain PittEE)).